We begin with the raw amino-acid sequence, 732 residues long: Prolyl tripeptidyl peptidase (732 aa).

An N-terminal signal peptide occupies residues Met-1–Ala-24. Catalysis depends on charge relay system residues Ser-603, Asp-678, and His-710.

This sequence belongs to the peptidase S9B family.

The enzyme catalyses Hydrolysis of Xaa-Xaa-Pro-|-Yaa- releasing the N-terminal tripeptide of a peptide with Pro as the third residue (position P1) and where Yaa is not proline.. Its function is as follows. Serine proteinase. Releases tripeptides from the free amino terminus of proteins. Has a requirement for Pro in the P1 position, but is inactivated by Pro in the P1' position. The polypeptide is Prolyl tripeptidyl peptidase (Porphyromonas gingivalis (strain ATCC 33277 / DSM 20709 / CIP 103683 / JCM 12257 / NCTC 11834 / 2561)).